A 295-amino-acid chain; its full sequence is Nucleotide-binding protein SSU98_0619 (295 aa).

12 to 19 is an ATP binding site; the sequence is GMSGAGKT. 62 to 65 serves as a coordination point for GTP; the sequence is DMRS.

The protein belongs to the RapZ-like family.

Functionally, displays ATPase and GTPase activities. This Streptococcus suis (strain 98HAH33) protein is Nucleotide-binding protein SSU98_0619.